The sequence spans 284 residues: Polyamine aminopropyltransferase (284 aa).

Residues 2–237 (ELWYTEKHTE…GHWLFGFASK (236 aa)) form the PABS domain. Position 31 (Gln31) interacts with S-methyl-5'-thioadenosine. Residues His62 and Asp86 each contribute to the spermidine site. S-methyl-5'-thioadenosine contacts are provided by residues Glu106 and 137-138 (DG). Residue Asp155 is the Proton acceptor of the active site. 155–158 (DSTD) contacts spermidine. Pro162 contacts S-methyl-5'-thioadenosine.

It belongs to the spermidine/spermine synthase family. In terms of assembly, homodimer or homotetramer.

It localises to the cytoplasm. The enzyme catalyses S-adenosyl 3-(methylsulfanyl)propylamine + putrescine = S-methyl-5'-thioadenosine + spermidine + H(+). The protein operates within amine and polyamine biosynthesis; spermidine biosynthesis; spermidine from putrescine: step 1/1. Its function is as follows. Catalyzes the irreversible transfer of a propylamine group from the amino donor S-adenosylmethioninamine (decarboxy-AdoMet) to putrescine (1,4-diaminobutane) to yield spermidine. The sequence is that of Polyamine aminopropyltransferase from Clostridium botulinum (strain Eklund 17B / Type B).